The primary structure comprises 103 residues: Large ribosomal subunit protein bL21 (103 aa).

This sequence belongs to the bacterial ribosomal protein bL21 family. In terms of assembly, part of the 50S ribosomal subunit. Contacts protein L20.

Functionally, this protein binds to 23S rRNA in the presence of protein L20. The protein is Large ribosomal subunit protein bL21 of Histophilus somni (strain 129Pt) (Haemophilus somnus).